We begin with the raw amino-acid sequence, 417 residues long: Serine hydroxymethyltransferase (417 aa).

Residues leucine 116 and 120–122 (GHL) contribute to the (6S)-5,6,7,8-tetrahydrofolate site. Lysine 225 carries the N6-(pyridoxal phosphate)lysine modification.

Belongs to the SHMT family. As to quaternary structure, homodimer. The cofactor is pyridoxal 5'-phosphate.

The protein resides in the cytoplasm. The enzyme catalyses (6R)-5,10-methylene-5,6,7,8-tetrahydrofolate + glycine + H2O = (6S)-5,6,7,8-tetrahydrofolate + L-serine. Its pathway is one-carbon metabolism; tetrahydrofolate interconversion. It functions in the pathway amino-acid biosynthesis; glycine biosynthesis; glycine from L-serine: step 1/1. In terms of biological role, catalyzes the reversible interconversion of serine and glycine with tetrahydrofolate (THF) serving as the one-carbon carrier. This reaction serves as the major source of one-carbon groups required for the biosynthesis of purines, thymidylate, methionine, and other important biomolecules. Also exhibits THF-independent aldolase activity toward beta-hydroxyamino acids, producing glycine and aldehydes, via a retro-aldol mechanism. This is Serine hydroxymethyltransferase from Hydrogenobaculum sp. (strain Y04AAS1).